The chain runs to 500 residues: MADGNTRFTVDEALVAMGFGKFQIYVLAYAGMGWVAEAMEMMLLSFVGPAVQSLWNLSARQESLITSVVFAGMLIGAYSWGIVSDKHGRRKGFIITAVVTFVAGFLSAFSPNYMWLIILRCLVGLGLGGGPVLASWYLEFIPAPSRGTWMVVFSAFWTVGTIFEASLAWLVMPRLGWRWLLAFSSVPSSLLLLFYRWTSESPRYLILQGRKAEALAILEKIARMNKTQLPPGVLSSELETELEENKNIPTENTHLLKAGESGEAVAVSKIVLKADKEPGFSLLALLSPTLMKRTLLLWVVFFGNAFAYYGVVLLTTELNNSHNRCYPTEKQLRNSNDVNYRDVFIASFAEFPGLLISAAMVDRLGRKASMASMLFTCCIFLLPLLSHQSPFITTVLLFGGRICISAAFTVVYIYAPEIYPTAVRTTGVGVGSSVGRIGGILCPLVAVGLVHGCHQTIAVLLFEVVILVSGICVCLFPFETSGRDLTDSISASKEPPSASV.

The Cytoplasmic portion of the chain corresponds to 1 to 23 (MADGNTRFTVDEALVAMGFGKFQ). The helical transmembrane segment at 24–44 (IYVLAYAGMGWVAEAMEMMLL) threads the bilayer. Topologically, residues 45-62 (SFVGPAVQSLWNLSARQE) are extracellular. Asn-56 carries an N-linked (GlcNAc...) asparagine glycan. The helical transmembrane segment at 63–83 (SLITSVVFAGMLIGAYSWGIV) threads the bilayer. The Cytoplasmic portion of the chain corresponds to 84–97 (SDKHGRRKGFIITA). Residues 98–118 (VVTFVAGFLSAFSPNYMWLII) form a helical membrane-spanning segment. The Extracellular portion of the chain corresponds to 119–120 (LR). A helical transmembrane segment spans residues 121–141 (CLVGLGLGGGPVLASWYLEFI). Residue 137-144 (YLEFIPAP) coordinates ATP. Over 142–150 (PAPSRGTWM) the chain is Cytoplasmic. Residues 151–171 (VVFSAFWTVGTIFEASLAWLV) traverse the membrane as a helical segment. Over 172-174 (MPR) the chain is Extracellular. Residues 175 to 195 (LGWRWLLAFSSVPSSLLLLFY) traverse the membrane as a helical segment. The Cytoplasmic portion of the chain corresponds to 196–293 (RWTSESPRYL…ALLSPTLMKR (98 aa)). The chain crosses the membrane as a helical span at residues 294–314 (TLLLWVVFFGNAFAYYGVVLL). Residues 315–341 (TTELNNSHNRCYPTEKQLRNSNDVNYR) lie on the Extracellular side of the membrane. An N-linked (GlcNAc...) asparagine glycan is attached at Asn-319. A helical transmembrane segment spans residues 342 to 362 (DVFIASFAEFPGLLISAAMVD). Residues 363–367 (RLGRK) are Cytoplasmic-facing. The helical transmembrane segment at 368–387 (ASMASMLFTCCIFLLPLLSH) threads the bilayer. Residues 388–401 (QSPFITTVLLFGGR) are Extracellular-facing. The helical transmembrane segment at 402–422 (ICISAAFTVVYIYAPEIYPTA) threads the bilayer. Over 423–429 (VRTTGVG) the chain is Cytoplasmic. Residues 430–450 (VGSSVGRIGGILCPLVAVGLV) form a helical membrane-spanning segment. The Extracellular segment spans residues 451–456 (HGCHQT). Residues 457–477 (IAVLLFEVVILVSGICVCLFP) traverse the membrane as a helical segment. At 478-500 (FETSGRDLTDSISASKEPPSASV) the chain is on the cytoplasmic side.

Belongs to the major facilitator (TC 2.A.1) superfamily. Organic cation transporter (TC 2.A.1.19) family. In terms of tissue distribution, expressed in pollen.

It is found in the membrane. High affinity carnitine transporter involved in the active cellular uptake of carnitine. Also transports organic cations. This chain is Organic cation/carnitine transporter 7 (OCT7), found in Arabidopsis thaliana (Mouse-ear cress).